The sequence spans 756 residues: Cilium assembly protein DZIP1L (756 aa).

The tract at residues 1–20 (MLGQFSPGEPYTTSLSSTPP) is disordered. Low complexity predominate over residues 10-19 (PYTTSLSSTP). Positions 108-158 (DFLSSQLAGLEERLQAATSLVQQGEGQRAELEKSLQETKQENRRRKQLIAT) form a coiled coil. The segment at 171-194 (HKCQFCEKSFVNYSYLQAHVQRRH) adopts a C2H2-type zinc-finger fold. Basic and acidic residues-rich tracts occupy residues 193–202 (RHPEVTDAEK), 237–262 (NLRR…ERWK), 319–335 (DPEK…LRER), and 344–365 (RRKF…KSEN). Disordered regions lie at residues 193-212 (RHPE…EEME), 233-262 (QQAD…ERWK), 310-365 (NNAS…KSEN), 409-466 (KIKK…MRES), 531-626 (VKSL…AYIT), and 693-756 (IKTP…GTSA). 2 coiled-coil regions span residues 196-283 (EVTD…FLQE) and 321-416 (EKEM…LSAT). The segment covering 534–558 (LQKSSGKPTPNTLKQRGKKTSTPLN) has biased composition (polar residues). Over residues 560–578 (KSLRFRQDSKASDRREKSQ) the composition is skewed to basic and acidic residues. Residues 586–598 (TPTPRSKAPPPNQ) show a composition bias toward pro residues.

This sequence belongs to the DZIP C2H2-type zinc-finger protein family.

It is found in the cytoplasm. The protein localises to the cytoskeleton. Its subcellular location is the cilium basal body. The protein resides in the microtubule organizing center. It localises to the centrosome. It is found in the centriole. In terms of biological role, involved in primary cilium formation. Probably acts as a transition zone protein required for localization of PKD1/PC1 and PKD2/PC2 to the ciliary membrane. The polypeptide is Cilium assembly protein DZIP1L (dzip1l) (Danio rerio (Zebrafish)).